Here is a 1749-residue protein sequence, read N- to C-terminus: Intraflagellar transport protein 172 homolog (1749 aa).

N-acetylmethionine is present on Met-1. Residue Lys-4 forms a Glycyl lysine isopeptide (Lys-Gly) (interchain with G-Cter in SUMO1) linkage. WD repeat units lie at residues 14-53 (DGAAKVTCMAWSQNNAKFAVCTVDRVVLLYDEHGERRDKF), 64-103 (RKSYMVKGMAFSPDSTKIAIGQTDNIIYVYKIGEDWGDKK), 110-148 (IQTSAVTCLQWPAEYVIVFGLAEGKVRLANTKTNKSSTI), 150-191 (GTES…ESQG), 195-233 (NHPCPPYALAWATNSIVAAGCDRRIVAYGKEGHVLQTFD), 238-278 (PQER…WEEA), 284-323 (ANLYTVTALAWKRDGSRLCAGTLCGGVEQFDCCLRRSIYK), 483-520 (SHESRVDWLELNETGHKLLFRDRKLRLHLYDIESCSKT), and 521-559 (MILNFCSYVQWVPGSDVLVAQNRNSLCVWYNIEAPERVT). One copy of the TPR 1 repeat lies at 593–624 (DEGLIEFGTAIDDGNYTRATAFLETLEMTPET). Arg-672 carries the omega-N-methylarginine modification. TPR repeat units lie at residues 692–725 (EKNYKLAEMIFLEQNAVEEAMDMYQELHRWEECI), 809–842 (GELYERAGDLFEKIRNPQRALECYCKGNAFMKAV), 854–887 (VRLEEAWGDHLVQQKQLDAAINHYIEARCSIKAI), 912–945 (SKYYPRVAQHYASLQEYEIAEELYTKGDRTKDAI), 947–970 (MYTQAGRWEQAHKLAMKCMRPEDV), 971–1004 (SVLYITQAQEMEKQGKYREAERLYVTVEEPDLAI), 1042–1075 (EGRLQEAEYHYLEAQEWKATVNMYRSSGLWEEAY), 1142–1175 (PEIHLKYAMYLEDEGKFEEAEAEFIRAGKPKEAV), 1276–1309 (VEGLVEQARQWEQAGEYSRAVDCYLKVRDSGSSG), 1345–1378 (IGKHSAAAELYLNLDLVKEAIDAFIEGEEWNKAK), 1411–1445 (GVDVVAALDLYVEQGQWDKCIETATKQNYKILHKY), 1447–1477 (ALYATHLIREGGYAQALALYVQHGAPANPQN), and 1574–1607 (DKAFYEAGTAAKEVGWENMAFIFLNRFLDLTDAI).

The protein belongs to the IFT172 family. Interacts with IFT88. Interacts with IFT57. Interacts with RABL2/RABL2A; binds preferentially to GDP-bound RABL2. In terms of tissue distribution, co-localizes with RABL2/RABL2A in the midpiece of elongated spermatids within the testis (at protein level). Expressed in the flagellum of elongated spermatids and sperm in the testis lumen (at protein level).

The protein localises to the cell projection. Its subcellular location is the cilium. Required for the maintenance and formation of cilia. Plays an indirect role in hedgehog (Hh) signaling, cilia being required for all activity of the hedgehog pathway. The protein is Intraflagellar transport protein 172 homolog (Ift172) of Mus musculus (Mouse).